A 941-amino-acid chain; its full sequence is Bifunctional glutamine synthetase adenylyltransferase/adenylyl-removing enzyme (941 aa).

The interval 1 to 437 is adenylyl removase; the sequence is MSIPTASLSP…TAEFAELLAP (437 aa). The segment at 444 to 941 is adenylyl transferase; that stretch reads PDTLADYWRA…FPLGKDEAAL (498 aa).

Belongs to the GlnE family. Mg(2+) is required as a cofactor.

The catalysed reaction is [glutamine synthetase]-O(4)-(5'-adenylyl)-L-tyrosine + phosphate = [glutamine synthetase]-L-tyrosine + ADP. It carries out the reaction [glutamine synthetase]-L-tyrosine + ATP = [glutamine synthetase]-O(4)-(5'-adenylyl)-L-tyrosine + diphosphate. Involved in the regulation of glutamine synthetase GlnA, a key enzyme in the process to assimilate ammonia. When cellular nitrogen levels are high, the C-terminal adenylyl transferase (AT) inactivates GlnA by covalent transfer of an adenylyl group from ATP to specific tyrosine residue of GlnA, thus reducing its activity. Conversely, when nitrogen levels are low, the N-terminal adenylyl removase (AR) activates GlnA by removing the adenylyl group by phosphorolysis, increasing its activity. The regulatory region of GlnE binds the signal transduction protein PII (GlnB) which indicates the nitrogen status of the cell. The chain is Bifunctional glutamine synthetase adenylyltransferase/adenylyl-removing enzyme from Xanthomonas oryzae pv. oryzae (strain MAFF 311018).